Reading from the N-terminus, the 153-residue chain is Endoribonuclease YbeY (153 aa).

Residues His118, His122, and His128 each coordinate Zn(2+).

This sequence belongs to the endoribonuclease YbeY family. The cofactor is Zn(2+).

It localises to the cytoplasm. In terms of biological role, single strand-specific metallo-endoribonuclease involved in late-stage 70S ribosome quality control and in maturation of the 3' terminus of the 16S rRNA. The polypeptide is Endoribonuclease YbeY (Pelagibacter ubique (strain HTCC1062)).